A 204-amino-acid chain; its full sequence is Holliday junction branch migration complex subunit RuvA (204 aa).

The interval 1–67 (MIAFLSGHLV…ETELVLYGFG (67 aa)) is domain I. Positions 68 to 146 (SPAERDLFVE…HWRQGMGVAD (79 aa)) are domain II. Positions 147 to 157 (QPLAGGPPMPI) are flexible linker. Positions 157–204 (IREEVEMALLALGYSTQEIQAALQALPTHPRPTEDWLRDAITYLSQQP) are domain III.

The protein belongs to the RuvA family. Homotetramer. Forms an RuvA(8)-RuvB(12)-Holliday junction (HJ) complex. HJ DNA is sandwiched between 2 RuvA tetramers; dsDNA enters through RuvA and exits via RuvB. An RuvB hexamer assembles on each DNA strand where it exits the tetramer. Each RuvB hexamer is contacted by two RuvA subunits (via domain III) on 2 adjacent RuvB subunits; this complex drives branch migration. In the full resolvosome a probable DNA-RuvA(4)-RuvB(12)-RuvC(2) complex forms which resolves the HJ.

It is found in the cytoplasm. Its function is as follows. The RuvA-RuvB-RuvC complex processes Holliday junction (HJ) DNA during genetic recombination and DNA repair, while the RuvA-RuvB complex plays an important role in the rescue of blocked DNA replication forks via replication fork reversal (RFR). RuvA specifically binds to HJ cruciform DNA, conferring on it an open structure. The RuvB hexamer acts as an ATP-dependent pump, pulling dsDNA into and through the RuvAB complex. HJ branch migration allows RuvC to scan DNA until it finds its consensus sequence, where it cleaves and resolves the cruciform DNA. This is Holliday junction branch migration complex subunit RuvA from Synechococcus sp. (strain JA-2-3B'a(2-13)) (Cyanobacteria bacterium Yellowstone B-Prime).